The sequence spans 67 residues: Large ribosomal subunit protein uL30 (67 aa).

This sequence belongs to the universal ribosomal protein uL30 family. As to quaternary structure, part of the 50S ribosomal subunit.

In Thermotoga neapolitana (strain ATCC 49049 / DSM 4359 / NBRC 107923 / NS-E), this protein is Large ribosomal subunit protein uL30.